A 444-amino-acid polypeptide reads, in one-letter code: Pineal opsin (444 aa).

Residues 1–20 form a disordered region; the sequence is MDALQESPPSHHSLPSALPS. Over 1–46 the chain is Extracellular; that stretch reads MDALQESPPSHHSLPSALPSATGGNGTVATMHNPFERPLEGIAPWN. Residues 7–20 are compositionally biased toward low complexity; sequence SPPSHHSLPSALPS. N-linked (GlcNAc...) asparagine glycosylation occurs at asparagine 25. A helical membrane pass occupies residues 47–71; sequence FTMLAALMGTITALSLGENFAVIVV. Residues 72–83 are Cytoplasmic-facing; the sequence is TARFRQLRQPLN. A helical membrane pass occupies residues 84 to 108; that stretch reads YVLVNLAAADLLVSAIGGSVSFFTN. Topologically, residues 109–123 are extracellular; it reads IKGYFFLGVHACVLE. Cysteine 120 and cysteine 197 are joined by a disulfide. A helical membrane pass occupies residues 124 to 143; the sequence is GFAVTYFGVVALWSLALLAF. Residues 144–162 are Cytoplasmic-facing; the sequence is ERYFVICRPLGNFRLQSKH. Residues 163–186 traverse the membrane as a helical segment; sequence AVLGLAVVWVFSLACTLPPVLGWS. Topologically, residues 187–210 are extracellular; that stretch reads SYRPSMIGTTCEPNWYSGELHDHT. The helical transmembrane segment at 211-238 threads the bilayer; it reads FILMFFSTCFIFPLAVIFFSYGKLIQKL. Residues 239–260 are Cytoplasmic-facing; the sequence is KKASETQRGLESTRRAEQQVTR. Residues 261–284 form a helical membrane-spanning segment; it reads MVVVMILAFLVCWMPYATFSIVVT. The Extracellular portion of the chain corresponds to 285–292; that stretch reads ACPTIHLD. The helical transmembrane segment at 293–317 threads the bilayer; it reads PLLAAVPAFFSKTATVYNPVIYIFM. Position 304 is an N6-(retinylidene)lysine (lysine 304). The Cytoplasmic segment spans residues 318–444; it reads NKQFRDCFVQ…SESVSKICPV (127 aa). Cysteine 331 is lipidated: S-palmitoyl cysteine. Disordered regions lie at residues 341–360 and 388–420; these read QTAG…QSPG and EPTM…QQGT. Over residues 409-419 the composition is skewed to low complexity; sequence QQQGQQQQQQG.

The protein belongs to the G-protein coupled receptor 1 family. Opsin subfamily. Post-translationally, phosphorylated on some or all of the serine and threonine residues present in the C-terminal region. Pineal gland.

It localises to the membrane. The sequence is that of Pineal opsin from Petromyzon marinus (Sea lamprey).